The chain runs to 553 residues: Probable malate:quinone oxidoreductase (553 aa).

A disordered region spans residues 524–553 (PPPKIDLGAPSQATGNAPARPAKASADMAL).

This sequence belongs to the MQO family. FAD is required as a cofactor.

The enzyme catalyses (S)-malate + a quinone = a quinol + oxaloacetate. It participates in carbohydrate metabolism; tricarboxylic acid cycle; oxaloacetate from (S)-malate (quinone route): step 1/1. In Burkholderia cenocepacia (strain HI2424), this protein is Probable malate:quinone oxidoreductase.